The primary structure comprises 719 residues: MFNKVTKTFQYGQHSVVLETGEMARQASGAVLVSVEDTVVLATVVAAKKAKAGQDFFPLTVDYIEKTYAAGRIPGGFFKREGKPSEKETLTSRLIDRPLRPLFPEGFYNDVQVVIHTLSVNPDIDPDIPAMIGASAALAISGIPFNGPIGAARVGYVDGQYVLNPTATQLKSSKMDLVVAGTENAVLMVESEAKQLSEEIMLGGVVFGHEQMQTAINAIHDLVRDAGKPDWDWQPAPKNEALIAAVSAAAQEGLNAAYQIREKQARTTKLREVYAAVQAAMAEQAAQAGQPAPDSVGVDNILFDLEARIVRSQILNGEPRIDGRDTRTVRPISIRLGVLPRAHGSALFTRGETQALVVATLGTKQDEQIIDALMGEYRDRFMLHYNMPPFATGETGRIGVPKRREIGHGRLAKRALLPLLPAPEDFQYTIRLVSEITESNGSSSMASVCGGSLAMMDAGVPTNDHVAGVAMGLILDSGKFAVLTDILGDEDHLGDMDFKVAGTETGITALQMDIKIQGITKEIMQVALAQAREGRLHILGKMRDALEGSRTELSAFAPRMLTIKINPEKIRDVIGKGGATIRALTEETGTQIDISDDGTIVIASVDETQAKEAQRRIVELTADVEVGQIYDGSVLRLLDFGAIVQVLPGRDGLLHISEIANYRIANINDVLKVGQPVRVKVIEADDKGRLRLSIKAIGGIEQQQSGTAEPAAQSEPQAE.

Mg(2+) contacts are provided by Asp-491 and Asp-497. The 60-residue stretch at 558 to 617 (PRMLTIKINPEKIRDVIGKGGATIRALTEETGTQIDISDDGTIVIASVDETQAKEAQRRI) folds into the KH domain. An S1 motif domain is found at 627–695 (GQIYDGSVLR…DKGRLRLSIK (69 aa)).

The protein belongs to the polyribonucleotide nucleotidyltransferase family. Requires Mg(2+) as cofactor.

It localises to the cytoplasm. It catalyses the reaction RNA(n+1) + phosphate = RNA(n) + a ribonucleoside 5'-diphosphate. Its function is as follows. Involved in mRNA degradation. Catalyzes the phosphorolysis of single-stranded polyribonucleotides processively in the 3'- to 5'-direction. This chain is Polyribonucleotide nucleotidyltransferase, found in Bordetella bronchiseptica (strain ATCC BAA-588 / NCTC 13252 / RB50) (Alcaligenes bronchisepticus).